The following is a 651-amino-acid chain: MSEKLYPVLPEAKKNTLIDNETYLEWYEESVSDPDGFWAKHGRRIDWFKPFTKVKNTDFNGDVTIKWYEDGVTNVSYNCIDRHLKSRGDKVAIIWEGDNPYIDKKITYRELYENVCRMANVLKKHGVKKGDRVTIYLPMIPEAAYAMLACARIGAVHSVVFAGFSPEALAGRIVDCESTFVITADEGVRGGKPVALKENTDTAIDIAAKQYVMVNKVLVVRRTGGKVSWGRGRDLWYHQEVASVEPHCEPEPMNAEDPLFILYTSGSTGKPKGVLHTTGGYLVYASMTHQYVFDYHDGEIYWCTADVGWVTGHSYIVYGPLANGATTLMFEGVPNFPDQGRFWEVVDKHHVNIFYTAPTALRALMGAGDEFVTRSSRSTLRLLGSVGEPINPEAWEWYYNVVGDQKCPIVDTWWQTENGGILITPLPGATDLKPGSATRPFFGVKPVLVDNEGNVQECVADGNLCISDSWPGQMRTVYGDHKRFIETYFSTYKGMYFSGDGCRRDEDGYYWITGRVDDVLNISGHRLGTAEIESALVSHHSVSEAAVVGYPHPIKGQGIYCYVTLMTGADAQDPDELRKELVQHVRKEIGPIATPDKIQFAPGLPKTRSGKIMRRILRKIAEDEFGALGDTSTLADRGVVDDLIENRQNKK.

CoA contacts are provided by residues 189 to 192 (RGGK), Thr311, and Asn335. Residues 387-389 (GEP), 411-416 (DTWWQT), Asp500, and Arg515 contribute to the ATP site. Position 523 (Ser523) interacts with CoA. Residue Arg526 participates in ATP binding. Val537, His539, and Val542 together coordinate Mg(2+). Arg586 lines the CoA pocket. Lys611 carries the N6-acetyllysine modification.

This sequence belongs to the ATP-dependent AMP-binding enzyme family. It depends on Mg(2+) as a cofactor. Post-translationally, acetylated. Deacetylation by the SIR2-homolog deacetylase activates the enzyme.

It catalyses the reaction acetate + ATP + CoA = acetyl-CoA + AMP + diphosphate. In terms of biological role, catalyzes the conversion of acetate into acetyl-CoA (AcCoA), an essential intermediate at the junction of anabolic and catabolic pathways. AcsA undergoes a two-step reaction. In the first half reaction, AcsA combines acetate with ATP to form acetyl-adenylate (AcAMP) intermediate. In the second half reaction, it can then transfer the acetyl group from AcAMP to the sulfhydryl group of CoA, forming the product AcCoA. This chain is Acetyl-coenzyme A synthetase, found in Brucella melitensis biotype 2 (strain ATCC 23457).